A 164-amino-acid polypeptide reads, in one-letter code: Putative histone H2B type 2-D (164 aa).

A compositionally biased stretch (low complexity) spans 1 to 12; sequence MPEPAKFAPAPK. The interval 1-33 is disordered; sequence MPEPAKFAPAPKKGSKKAVTKAQKKDGKKRKRS. P2 bears the N-acetylproline mark. An N6-(2-hydroxyisobutyryl)lysine; alternate modification is found at K6. N6-(beta-hydroxybutyryl)lysine; alternate occurs at positions 6 and 12. K6, K12, and K13 each carry N6-acetyllysine; alternate. Residue K6 is modified to N6-butyryllysine; alternate. K6, K12, and K13 each carry N6-crotonyllysine; alternate. N6-lactoyllysine; alternate is present on residues K6 and K12. K6 participates in a covalent cross-link: Glycyl lysine isopeptide (Lys-Gly) (interchain with G-Cter in SUMO2); alternate. N6-(2-hydroxyisobutyryl)lysine; alternate is present on K13. The residue at position 15 (S15) is a Phosphoserine; by STK4/MST1. K16, K17, K21, and K24 each carry N6-acetyllysine; alternate. N6-crotonyllysine; alternate is present on residues K16, K17, K21, and K24. K16, K17, K21, and K24 each carry N6-lactoyllysine; alternate. N6-(beta-hydroxybutyryl)lysine; alternate is present on residues K17 and K21. Residue K17 is modified to N6-glutaryllysine; alternate. K21 and K24 each carry N6-(2-hydroxyisobutyryl)lysine; alternate. K21 carries the N6-butyryllysine; alternate modification. A Glycyl lysine isopeptide (Lys-Gly) (interchain with G-Cter in SUMO2); alternate cross-link involves residue K21. The residue at position 25 (K25) is an N6-(2-hydroxyisobutyryl)lysine. The residue at position 35 (K35) is an N6-(2-hydroxyisobutyryl)lysine; alternate. At K35 the chain carries N6-(beta-hydroxybutyryl)lysine; alternate. Position 35 is an N6-crotonyllysine; alternate (K35). K35 bears the N6-glutaryllysine; alternate mark. An N6-succinyllysine; alternate modification is found at K35. K35 is covalently cross-linked (Glycyl lysine isopeptide (Lys-Gly) (interchain with G-Cter in ubiquitin); alternate). At S37 the chain carries Phosphoserine; by AMPK. 3 positions are modified to N6-(2-hydroxyisobutyryl)lysine; alternate: K44, K47, and K58. At K44 the chain carries N6-lactoyllysine; alternate. N6-glutaryllysine; alternate is present on residues K44 and K47. N6-methyllysine; alternate is present on K47. K58 bears the N6,N6-dimethyllysine; alternate mark. The residue at position 80 (R80) is a Dimethylated arginine. At K86 the chain carries N6-(2-hydroxyisobutyryl)lysine; alternate. K86 is modified (N6-(beta-hydroxybutyryl)lysine; alternate). At K86 the chain carries N6-acetyllysine; alternate. K86 is subject to N6-lactoyllysine; alternate. At K86 the chain carries N6,N6,N6-trimethyllysine; alternate. Residues R87 and R93 each carry the omega-N-methylarginine modification. Positions 111–140 are disordered; the sequence is PCPRAPRRSPSTPAPSESLPGPGARSLPPS.

The protein belongs to the histone H2B family. As to quaternary structure, the nucleosome is a histone octamer containing two molecules each of H2A, H2B, H3 and H4 assembled in one H3-H4 heterotetramer and two H2A-H2B heterodimers. The octamer wraps approximately 147 bp of DNA. In terms of processing, phosphorylation at Ser-37 (H2BS36ph) by AMPK in response to stress promotes transcription. Phosphorylated on Ser-15 (H2BS14ph) by STK4/MST1 during apoptosis; which facilitates apoptotic chromatin condensation. Also phosphorylated on Ser-15 in response to DNA double strand breaks (DSBs), and in correlation with somatic hypermutation and immunoglobulin class-switch recombination. Crotonylation (Kcr) is specifically present in male germ cells and marks testis-specific genes in post-meiotic cells, including X-linked genes that escape sex chromosome inactivation in haploid cells. Crotonylation marks active promoters and enhancers and confers resistance to transcriptional repressors. It is also associated with post-meiotically activated genes on autosomes. Post-translationally, lactylated in macrophages by EP300/P300 by using lactoyl-CoA directly derived from endogenous or exogenous lactate, leading to stimulates gene transcription.

It is found in the nucleus. It localises to the chromosome. In terms of biological role, core component of nucleosome. Nucleosomes wrap and compact DNA into chromatin, limiting DNA accessibility to the cellular machineries which require DNA as a template. Histones thereby play a central role in transcription regulation, DNA repair, DNA replication and chromosomal stability. DNA accessibility is regulated via a complex set of post-translational modifications of histones, also called histone code, and nucleosome remodeling. This chain is Putative histone H2B type 2-D, found in Homo sapiens (Human).